The sequence spans 217 residues: Adenylate kinase (217 aa).

10-15 is an ATP binding site; that stretch reads GAGKGT. The segment at 30 to 59 is NMP; sequence STGDIFRSNVSQGTPLGVQAKRYMDAGELV. AMP-binding positions include T31, R36, 57–59, 85–88, and Q92; these read ELV and GFPR. Positions 126 to 163 are LID; the sequence is GRRTCRGCGKVWHVEFDAPSQEGRCDRCGAELFQRDDD. R127 is a binding site for ATP. Zn(2+) contacts are provided by C130, C133, C150, and C153. Residues R160 and R171 each contribute to the AMP site. G199 contacts ATP.

The protein belongs to the adenylate kinase family. In terms of assembly, monomer.

The protein localises to the cytoplasm. The catalysed reaction is AMP + ATP = 2 ADP. The protein operates within purine metabolism; AMP biosynthesis via salvage pathway; AMP from ADP: step 1/1. Catalyzes the reversible transfer of the terminal phosphate group between ATP and AMP. Plays an important role in cellular energy homeostasis and in adenine nucleotide metabolism. This Salinispora tropica (strain ATCC BAA-916 / DSM 44818 / JCM 13857 / NBRC 105044 / CNB-440) protein is Adenylate kinase.